Here is a 567-residue protein sequence, read N- to C-terminus: 2-succinyl-5-enolpyruvyl-6-hydroxy-3-cyclohexene-1-carboxylate synthase (567 aa).

The protein belongs to the TPP enzyme family. MenD subfamily. Homodimer. Mg(2+) serves as cofactor. The cofactor is Mn(2+). It depends on thiamine diphosphate as a cofactor.

It catalyses the reaction isochorismate + 2-oxoglutarate + H(+) = 5-enolpyruvoyl-6-hydroxy-2-succinyl-cyclohex-3-ene-1-carboxylate + CO2. The protein operates within quinol/quinone metabolism; 1,4-dihydroxy-2-naphthoate biosynthesis; 1,4-dihydroxy-2-naphthoate from chorismate: step 2/7. It functions in the pathway quinol/quinone metabolism; menaquinone biosynthesis. Catalyzes the thiamine diphosphate-dependent decarboxylation of 2-oxoglutarate and the subsequent addition of the resulting succinic semialdehyde-thiamine pyrophosphate anion to isochorismate to yield 2-succinyl-5-enolpyruvyl-6-hydroxy-3-cyclohexene-1-carboxylate (SEPHCHC). The chain is 2-succinyl-5-enolpyruvyl-6-hydroxy-3-cyclohexene-1-carboxylate synthase from Yersinia pseudotuberculosis serotype I (strain IP32953).